The sequence spans 198 residues: MGSARRALSVVPAVLLILVLPVWAQNDTEPIVLEGKCLVVCDSNPATDSKGSSSSPLGISVRAANSKVAFSAVRSTNHEPSEMSNKTRIIYFDQILVNVGNFFTLESVFVAPRKGIYSFSFHVIKVYQSQTIQVNLMLNGKPVISAFAGDKDVTREAATNGVLLYLDKEDKVYLKLEKGNLLGGWQYSTFSGFLVFPL.

The N-terminal stretch at 1–24 (MGSARRALSVVPAVLLILVLPVWA) is a signal peptide. 2 N-linked (GlcNAc...) asparagine glycosylation sites follow: Asn26 and Asn85. One can recognise a C1q domain in the interval 63 to 198 (AANSKVAFSA…TFSGFLVFPL (136 aa)).

In terms of assembly, homohexamer; disulfide-linked homotrimers. The trimers are assembled via the globular C1q domains. The trimers associate via N-terminal cysteine residues to form disulfide-linked hexamers. May form oligomers with CBLN1, CBLN2 and CBLN3 prior to secretion. Once secreted, does not interact with other CBLN family members. Strongly interacts with DCC in a NTN1-displaceable fashion. Weakly binds to NRXN1 and NRXN2 long and short isoforms produced by alternative promoter usage. Interaction with NRXN3 short isoform is hardly detectable; no interaction at all with NRXN3 long isoform. Does not interact with NEO1, GRID1 and GRID2. Post-translationally, sialoglycoprotein. As to expression, expressed in brain with high levels in particular thalamic nuclei. In the thalamus, predominantly expressed in neurons within the parafascicular nucleus. Found in the hippocampus, mostly in the dendrites and somata of pyramidal neurons (at protein level). Very low or no expression in most other brain regions. Highly expressed in the ventral medial habenula.

The protein localises to the secreted. Its subcellular location is the synapse. Its function is as follows. Acts as a synaptic organizer in specific subsets of neurons in the brain. Essential for the formation and maintenance of inhibitory GABAergic synapses. Promotes the development of dendrite-targeting inhibitory GABAergic synapses made by somatostatin-positive interneurons. May contribute to the function of ventral medial habenula region of the brain implicated in the regulation of anxiety-related behaviors. May play a role in CBLN3 export from the endoplasmic reticulum and secretion. In Mus musculus (Mouse), this protein is Cerebellin-4 (Cbln4).